The following is a 258-amino-acid chain: Alpha-fibrinogenase albofibrase (258 aa).

Residues 1–18 (MVLIRVLANLLILQLSYA) form the signal peptide. Residues 19–24 (QKSSEL) constitute a propeptide that is removed on maturation. The region spanning 25-249 (VVGGDECNIN…YNDWIQSIIA (225 aa)) is the Peptidase S1 domain. 6 disulfides stabilise this stretch: C31–C163, C50–C66, C98–C256, C142–C210, C174–C189, and C200–C225. N44 carries N-linked (GlcNAc...) asparagine glycosylation. Residues H65 and D110 each act as charge relay system in the active site. The active-site Charge relay system is S204.

This sequence belongs to the peptidase S1 family. Snake venom subfamily. Monomer. Expressed by the venom gland.

The protein resides in the secreted. Functionally, the recombinant protein has fibrinogenolytic activity against the Aalpha chain (FGA) of fibrinogen. Activates plasminogen (PLG) (is 4-fold less active than urokinase). Has weak thrombin-like enzyme activity. Has enzymatic activity against a trypsin-like substrate (S-3013) and shows a weaker activity on an activated protein C substrate (S-3125). This Trimeresurus albolabris (White-lipped pit viper) protein is Alpha-fibrinogenase albofibrase.